A 157-amino-acid chain; its full sequence is Small ribosomal subunit protein uS7 (157 aa).

It belongs to the universal ribosomal protein uS7 family. As to quaternary structure, part of the 30S ribosomal subunit. Contacts proteins S9 and S11.

Functionally, one of the primary rRNA binding proteins, it binds directly to 16S rRNA where it nucleates assembly of the head domain of the 30S subunit. Is located at the subunit interface close to the decoding center, probably blocks exit of the E-site tRNA. The sequence is that of Small ribosomal subunit protein uS7 from Herpetosiphon aurantiacus (strain ATCC 23779 / DSM 785 / 114-95).